We begin with the raw amino-acid sequence, 348 residues long: Protein RecA (348 aa).

An ATP-binding site is contributed by 64 to 71 (GPESSGKT). A disordered region spans residues 328 to 348 (DTGGAAPAQEDEAQAQEELEF). The span at 336-348 (QEDEAQAQEELEF) shows a compositional bias: acidic residues.

The protein belongs to the RecA family.

The protein localises to the cytoplasm. Functionally, can catalyze the hydrolysis of ATP in the presence of single-stranded DNA, the ATP-dependent uptake of single-stranded DNA by duplex DNA, and the ATP-dependent hybridization of homologous single-stranded DNAs. It interacts with LexA causing its activation and leading to its autocatalytic cleavage. The polypeptide is Protein RecA (Bacillus licheniformis (strain ATCC 14580 / DSM 13 / JCM 2505 / CCUG 7422 / NBRC 12200 / NCIMB 9375 / NCTC 10341 / NRRL NRS-1264 / Gibson 46)).